The sequence spans 156 residues: Arginine repressor (156 aa).

Belongs to the ArgR family.

It localises to the cytoplasm. The protein operates within amino-acid biosynthesis; L-arginine biosynthesis [regulation]. Its function is as follows. Regulates arginine biosynthesis genes. This chain is Arginine repressor, found in Vibrio cholerae serotype O1 (strain ATCC 39315 / El Tor Inaba N16961).